The sequence spans 296 residues: Ribosome biogenesis GTPase A (296 aa).

A CP-type G domain is found at 14-178 (RRQVTEKLKL…LLDTPGILWP (165 aa)). Residues 58 to 61 (NKAD), 130 to 135 (NVGKST), and Gly174 contribute to the GTP site.

Belongs to the TRAFAC class YlqF/YawG GTPase family. MTG1 subfamily. In terms of assembly, interacts with ctc. Interacts with the immature 50S ribosome subunit. 2 molecules of rbgA bind to one 50S subunit.

Its subcellular location is the cytoplasm. In terms of biological role, essential protein that is required for a late step of 50S ribosomal subunit assembly. Has GTPase activity that is stimulated by interaction with the immature 50S ribosome subunit. Binds to the 23S rRNA. Required for the association of ribosomal proteins rplP and rpmA with the large subunit. The polypeptide is Ribosome biogenesis GTPase A (Bacillus cereus (strain ATCC 14579 / DSM 31 / CCUG 7414 / JCM 2152 / NBRC 15305 / NCIMB 9373 / NCTC 2599 / NRRL B-3711)).